The sequence spans 237 residues: Large ribosomal subunit protein uL22m (237 aa).

Belongs to the universal ribosomal protein uL22 family.

The protein resides in the mitochondrion. This is Large ribosomal subunit protein uL22m (mrpl22) from Dictyostelium discoideum (Social amoeba).